The sequence spans 236 residues: Small ribosomal subunit protein uS2c (236 aa).

The protein belongs to the universal ribosomal protein uS2 family.

It localises to the plastid. The protein localises to the chloroplast. The sequence is that of Small ribosomal subunit protein uS2c (rps2) from Amborella trichopoda.